A 190-amino-acid polypeptide reads, in one-letter code: Large ribosomal subunit protein uL6 (190 aa).

This sequence belongs to the universal ribosomal protein uL6 family.

This Spodoptera frugiperda (Fall armyworm) protein is Large ribosomal subunit protein uL6 (RpL9).